Here is a 360-residue protein sequence, read N- to C-terminus: Phenylalanine--tRNA ligase alpha subunit (360 aa).

Glutamate 260 serves as a coordination point for Mg(2+).

Belongs to the class-II aminoacyl-tRNA synthetase family. Phe-tRNA synthetase alpha subunit type 1 subfamily. As to quaternary structure, tetramer of two alpha and two beta subunits. Mg(2+) serves as cofactor.

Its subcellular location is the cytoplasm. It carries out the reaction tRNA(Phe) + L-phenylalanine + ATP = L-phenylalanyl-tRNA(Phe) + AMP + diphosphate + H(+). The polypeptide is Phenylalanine--tRNA ligase alpha subunit (Bradyrhizobium sp. (strain ORS 278)).